The sequence spans 273 residues: Large ribosomal subunit protein uL2 (273 aa).

Residues 224–263 (AMNPVDHPHGGGEGRNFGKHPVTPWGLQTKGKKTRKNKRT) form a disordered region. The segment covering 253–263 (KGKKTRKNKRT) has biased composition (basic residues).

Belongs to the universal ribosomal protein uL2 family. In terms of assembly, part of the 50S ribosomal subunit. Forms a bridge to the 30S subunit in the 70S ribosome.

Its function is as follows. One of the primary rRNA binding proteins. Required for association of the 30S and 50S subunits to form the 70S ribosome, for tRNA binding and peptide bond formation. It has been suggested to have peptidyltransferase activity; this is somewhat controversial. Makes several contacts with the 16S rRNA in the 70S ribosome. The protein is Large ribosomal subunit protein uL2 of Buchnera aphidicola subsp. Schizaphis graminum (strain Sg).